The following is a 209-amino-acid chain: NAD(P)H-quinone oxidoreductase subunit I (209 aa).

2 4Fe-4S ferredoxin-type domains span residues 55 to 84 (GRIH…VDWE) and 95 to 124 (KHYS…MTEE). [4Fe-4S] cluster is bound by residues cysteine 64, cysteine 67, cysteine 70, cysteine 74, cysteine 104, cysteine 107, cysteine 110, and cysteine 114.

This sequence belongs to the complex I 23 kDa subunit family. NDH-1 is composed of at least 11 different subunits. Requires [4Fe-4S] cluster as cofactor.

The protein localises to the cellular thylakoid membrane. The catalysed reaction is a plastoquinone + NADH + (n+1) H(+)(in) = a plastoquinol + NAD(+) + n H(+)(out). It carries out the reaction a plastoquinone + NADPH + (n+1) H(+)(in) = a plastoquinol + NADP(+) + n H(+)(out). In terms of biological role, NDH-1 shuttles electrons from an unknown electron donor, via FMN and iron-sulfur (Fe-S) centers, to quinones in the respiratory and/or the photosynthetic chain. The immediate electron acceptor for the enzyme in this species is believed to be plastoquinone. Couples the redox reaction to proton translocation, and thus conserves the redox energy in a proton gradient. The chain is NAD(P)H-quinone oxidoreductase subunit I from Trichodesmium erythraeum (strain IMS101).